The following is a 302-amino-acid chain: Polyadenylate-binding protein 2 (302 aa).

The segment covering 1-12 (MAAAAAAAAAAG) has biased composition (low complexity). The tract at residues 1-111 (MAAAAAAAAA…EADPGDGAIE (111 aa)) is disordered. Ala2 is subject to N-acetylalanine. An interaction with SKIP region spans residues 2–141 (AAAAAAAAAA…LKELQNEVEK (140 aa)). Residue Arg17 is modified to Omega-N-methylarginine. Ser19 bears the Phosphoserine mark. Gly residues predominate over residues 30–47 (GAGGEAGEGDPGGAGDYG). Acidic residues predominate over residues 51-68 (ESEELEPGELLPEPEPEE). A Phosphoserine modification is found at Ser52. The span at 73–83 (PRAPPGAPGPG) shows a compositional bias: pro residues. Position 91 is a phosphoserine (Ser91). A coiled-coil region spans residues 111-147 (EDPELEAIKARVREMEEEAEKLKELQNEVEKQMNMSP). The interval 115–143 (LEAIKARVREMEEEAEKLKELQNEVEKQM) is stimulates PAPOLA. Phosphoserine occurs at positions 146 and 231. Residues 168–245 (RSIYVGNVDY…RQIKVIPKRT (78 aa)) form the RRM domain. Asymmetric dimethylarginine; alternate occurs at positions 234, 255, and 259. An omega-N-methylarginine; alternate mark is found at Arg234, Arg255, and Arg259. The segment at 255–302 (RGFPRSRYRARTTNYNSSRSRFYSGFNSRPRGRIYRGRARATSWYSPY) is strong poly(A) affinity and self-association. 11 positions are modified to asymmetric dimethylarginine: Arg261, Arg263, Arg265, Arg273, Arg275, Arg283, Arg285, Arg287, Arg290, Arg292, and Arg294. The interval 282–302 (SRPRGRIYRGRARATSWYSPY) is interaction with PAPOLA.

Monomer and homooligomer. Identified in a IGF2BP1-dependent mRNP granule complex containing untranslated mRNAs. Binds RNA as a monomer and oligomerizes when bound to poly(A). Interacts with PAPOLA, but only in presence of oligo(A) RNA. Interacts with NUDT21/CPSF5 and transportin. Associates in a ternary complex with CPSF4 and NS/NS1 and interaction with NS/NS1, blocks nuclear export of host cell mRNAs. Associates in a single complex with SKIP and MYOD1 and interacts with SKIP in differentiated myocytes. May interact with SETX. Interacts (via RRM domain and C-terminal arginine-rich region) with ZFP36 (via hypophosphorylated form); this interaction occurs in the nucleus in a RNA-independent manner, decreases in presence of single-stranded poly(A) RNA-oligomer and in a p38-dependent-manner and may down-regulated RNA poly(A) polymerase activity. Component of the poly(A) tail exosome targeting (PAXT) complex composed of PABPN1, ZFC3H1 and MTREX. Interacts with ZFC3H1 in a RNase-insensitive manner. Interacts with FRG1. Interacts with ZC3H11A. Arginine dimethylation is asymmetric and involves PRMT1 and PRMT3. It does not influence the RNA binding properties. Ubiquitous.

The protein localises to the cytoplasm. It localises to the nucleus. Its subcellular location is the nucleus speckle. In terms of biological role, involved in the 3'-end formation of mRNA precursors (pre-mRNA) by the addition of a poly(A) tail of 200-250 nt to the upstream cleavage product. Stimulates poly(A) polymerase (PAPOLA) conferring processivity on the poly(A) tail elongation reaction and also controls the poly(A) tail length. Increases the affinity of poly(A) polymerase for RNA. Is also present at various stages of mRNA metabolism including nucleocytoplasmic trafficking and nonsense-mediated decay (NMD) of mRNA. Cooperates with SKIP to synergistically activate E-box-mediated transcription through MYOD1 and may regulate the expression of muscle-specific genes. Binds to poly(A) and to poly(G) with high affinity. May protect the poly(A) tail from degradation. Subunit of the trimeric poly(A) tail exosome targeting (PAXT) complex, a complex that directs a subset of long and polyadenylated poly(A) RNAs for exosomal degradation. The RNA exosome is fundamental for the degradation of RNA in eukaryotic nuclei. Substrate targeting is facilitated by its cofactor MTREX, which links to RNA-binding protein adapters. The sequence is that of Polyadenylate-binding protein 2 (Pabpn1) from Mus musculus (Mouse).